The following is a 400-amino-acid chain: Cytochrome b (400 aa).

The next 4 helical transmembrane spans lie at 32–52 (FGSL…TLAM), 76–98 (WLIR…LHIG), 113–133 (TWSI…LGYV), and 179–199 (FFSL…MHLI). Heme b is bound by residues His-82 and His-96. Heme b contacts are provided by His-183 and His-197. His-202 serves as a coordination point for a ubiquinone. A run of 4 helical transmembrane segments spans residues 226–246 (YLFK…IFVF), 290–310 (AVGV…PYLD), 322–342 (LSKV…QLGA), and 349–369 (FIVF…IIIP).

The protein belongs to the cytochrome b family. As to quaternary structure, fungal cytochrome b-c1 complex contains 10 subunits; 3 respiratory subunits, 2 core proteins and 5 low-molecular weight proteins. Cytochrome b-c1 complex is a homodimer. The cofactor is heme b.

It localises to the mitochondrion inner membrane. Its function is as follows. Component of the ubiquinol-cytochrome c reductase complex (complex III or cytochrome b-c1 complex) that is part of the mitochondrial respiratory chain. The b-c1 complex mediates electron transfer from ubiquinol to cytochrome c. Contributes to the generation of a proton gradient across the mitochondrial membrane that is then used for ATP synthesis. This chain is Cytochrome b (cob), found in Epidermophyton floccosum.